The following is a 683-amino-acid chain: MKTNIINTWHSFVNIPNVVVPAIEKEIRRMENGACSSFSDNDNGSLSEESENEDSLFRSNSYRRRGPSQREHYLPGTMALFNVNNSSNKDQDPKEKKKKKKEKKSKADDKKESKKDPEKKKKKEKEKEKKKEEKPKEKKEEEKKEVVVIDPSGNMYYNWLFCITLPVMYNWTMIIARACFDELQSDYLEYWLIFDYVSDVVYLADMFVRTRTGYLEQGLLVKDELKLIEKYKANLQFKLDVLSVIPTDLLYFKFGWNYPEIRLNRLLRISRMFEFFQRTETRTNYPNIFRISNLVMYIVIIIHWNACVYYSISKAIGFGNDTWVYPDVNDPEFGRLARKYVYSLYWSTLTLTTIGETPPPVLDSEYVFVVVDFLIGVLIFATIVGNIGSMISNMNAARAEFQSRVDAIKQYMNFRNVSKDMEKRVIKWFDYLWTNKKTVDEREVLRYLPDKLRAEIAINVHLDTLKKVRIFADCEAGLLVELVLKLQPQVYSPGDYICKKGDIGREMYIIKEGKLAVVADDGITQFVVLSDGSYFGEISILNIKGSKAGNRRTANIKSIGYSDLFCLSKDDLMEALTEYPDAKTMLEEKGRQILMKDGLLDINIANLGSDPKDLEEKVTRMEGSVDLLQTRFARILAEYESMQQKLKQRLTKVEKFLKPLIETEFSALEEPGGESEPTESLQG.

Residues 1–160 (MKTNIINTWH…PSGNMYYNWL (160 aa)) lie on the Cytoplasmic side of the membrane. The segment at 34-144 (ACSSFSDNDN…PKEKKEEEKK (111 aa)) is disordered. Residues 105-144 (SKADDKKESKKDPEKKKKKEKEKEKKKEEKPKEKKEEEKK) are compositionally biased toward basic and acidic residues. A helical transmembrane segment spans residues 161 to 182 (FCITLPVMYNWTMIIARACFDE). The Extracellular segment spans residues 183 to 192 (LQSDYLEYWL). The helical transmembrane segment at 193 to 213 (IFDYVSDVVYLADMFVRTRTG) threads the bilayer. Over 214–238 (YLEQGLLVKDELKLIEKYKANLQFK) the chain is Cytoplasmic. A helical transmembrane segment spans residues 239-257 (LDVLSVIPTDLLYFKFGWN). Topologically, residues 258–262 (YPEIR) are extracellular. The helical transmembrane segment at 263 to 281 (LNRLLRISRMFEFFQRTET) threads the bilayer. Residues 282 to 288 (RTNYPNI) lie on the Cytoplasmic side of the membrane. Positions 286–394 (PNIFRISNLV…GNIGSMISNM (109 aa)) are ion conduction pathway. A helical transmembrane segment spans residues 289–312 (FRISNLVMYIVIIIHWNACVYYSI). Topologically, residues 313–335 (SKAIGFGNDTWVYPDVNDPEFGR) are extracellular. Asn320 carries N-linked (GlcNAc...) asparagine glycosylation. Transmembrane regions (helical) follow at residues 336–370 (LARK…VFVV) and 371–395 (VDFL…SNMN). Residues 353-356 (TIGE) are selectivity filter. A C-linker region spans residues 396 to 472 (AARAEFQSRV…DTLKKVRIFA (77 aa)). Topologically, residues 396–683 (AARAEFQSRV…ESEPTESLQG (288 aa)) are cytoplasmic. The segment at 476–596 (AGLLVELVLK…EEKGRQILMK (121 aa)) is cyclic nucleotide-binding domain. 3',5'-cyclic GMP-binding residues include Gly536, Ser539, Arg552, and Thr553. Residues Arg552 and Thr553 each contribute to the 3',5'-cyclic AMP site. Residues 614-668 (LEEKVTRMEGSVDLLQTRFARILAEYESMQQKLKQRLTKVEKFLKPLIETEFSAL) are a coiled coil.

Belongs to the cyclic nucleotide-gated cation channel (TC 1.A.1.5) family. CNGA1 subfamily. In terms of assembly, forms heterotetrameric channels composed of CNGA1 and CNGB1 subunits with 3:1 stoichiometry. May also form cyclic nucleotide-activated homotetrameric channels, that are efficiently activated by saturating cGMP, but poorly activated by saturating cAMP compared to the heterotetramer with CNGB1. The channel binds Ca(2+)-bound CALM1 via CaM1 and CaM2 regions of the CNGB1 subunit; this interaction modulates the affinity of the channel for cNMPs in response to intracellular Ca(2+) levels. In terms of tissue distribution, rod cells in the retina.

Its subcellular location is the cell membrane. It catalyses the reaction Ca(2+)(in) = Ca(2+)(out). The catalysed reaction is Na(+)(in) = Na(+)(out). The enzyme catalyses K(+)(in) = K(+)(out). It carries out the reaction NH4(+)(in) = NH4(+)(out). It catalyses the reaction Rb(+)(in) = Rb(+)(out). The catalysed reaction is Li(+)(in) = Li(+)(out). The enzyme catalyses Cs(+)(in) = Cs(+)(out). Functionally, pore-forming subunit of the rod cyclic nucleotide-gated channel. Mediates rod photoresponses at dim light converting transient changes in intracellular cGMP levels into electrical signals. In the dark, cGMP levels are high and keep the channel open enabling a steady inward current carried by Na(+) and Ca(2+) ions that leads to membrane depolarization and neurotransmitter release from synaptic terminals. Upon photon absorption cGMP levels decline leading to channel closure and membrane hyperpolarization that ultimately slows neurotransmitter release and signals the presence of light, the end point of the phototransduction cascade. Conducts cGMP- and cAMP-gated ion currents, with permeability for monovalent and divalent cations. The selectivity for Ca(2+) over Na(+) increases with cGMP concentrations, whereas the selectivity among monovalent ions is independent of the cGMP levels. The sequence is that of Cyclic nucleotide-gated channel alpha-1 from Rattus norvegicus (Rat).